Reading from the N-terminus, the 367-residue chain is UDP-N-acetylglucosamine--N-acetylmuramyl-(pentapeptide) pyrophosphoryl-undecaprenol N-acetylglucosamine transferase (367 aa).

UDP-N-acetyl-alpha-D-glucosamine is bound by residues 15-17 (TGG), N127, R163, S191, I249, and Q294.

This sequence belongs to the glycosyltransferase 28 family. MurG subfamily.

It localises to the cell inner membrane. The enzyme catalyses di-trans,octa-cis-undecaprenyl diphospho-N-acetyl-alpha-D-muramoyl-L-alanyl-D-glutamyl-meso-2,6-diaminopimeloyl-D-alanyl-D-alanine + UDP-N-acetyl-alpha-D-glucosamine = di-trans,octa-cis-undecaprenyl diphospho-[N-acetyl-alpha-D-glucosaminyl-(1-&gt;4)]-N-acetyl-alpha-D-muramoyl-L-alanyl-D-glutamyl-meso-2,6-diaminopimeloyl-D-alanyl-D-alanine + UDP + H(+). The protein operates within cell wall biogenesis; peptidoglycan biosynthesis. Its function is as follows. Cell wall formation. Catalyzes the transfer of a GlcNAc subunit on undecaprenyl-pyrophosphoryl-MurNAc-pentapeptide (lipid intermediate I) to form undecaprenyl-pyrophosphoryl-MurNAc-(pentapeptide)GlcNAc (lipid intermediate II). The protein is UDP-N-acetylglucosamine--N-acetylmuramyl-(pentapeptide) pyrophosphoryl-undecaprenol N-acetylglucosamine transferase of Burkholderia pseudomallei (strain 1106a).